Here is a 99-residue protein sequence, read N- to C-terminus: Putative septation protein SpoVG (99 aa).

It belongs to the SpoVG family.

Functionally, could be involved in septation. The protein is Putative septation protein SpoVG of Exiguobacterium sp. (strain ATCC BAA-1283 / AT1b).